The primary structure comprises 159 residues: Large ribosomal subunit protein uL22 (159 aa).

This sequence belongs to the universal ribosomal protein uL22 family. Part of the 50S ribosomal subunit.

This protein binds specifically to 23S rRNA; its binding is stimulated by other ribosomal proteins, e.g. L4, L17, and L20. It is important during the early stages of 50S assembly. It makes multiple contacts with different domains of the 23S rRNA in the assembled 50S subunit and ribosome. In terms of biological role, the globular domain of the protein is located near the polypeptide exit tunnel on the outside of the subunit, while an extended beta-hairpin is found that lines the wall of the exit tunnel in the center of the 70S ribosome. In Thermotoga sp. (strain RQ2), this protein is Large ribosomal subunit protein uL22.